Reading from the N-terminus, the 304-residue chain is Non-specific ribonucleoside hydrolase RihC (304 aa).

His233 is a catalytic residue.

Belongs to the IUNH family. RihC subfamily.

Functionally, hydrolyzes both purine and pyrimidine ribonucleosides with a broad-substrate specificity. The protein is Non-specific ribonucleoside hydrolase RihC of Escherichia coli O17:K52:H18 (strain UMN026 / ExPEC).